The following is an 87-amino-acid chain: Putative sodium channel toxin Ts40 (87 aa).

A signal peptide spans 1–19; that stretch reads MTALFYLLFLTSVIIETHQ. 3 cysteine pairs are disulfide-bonded: cysteine 41–cysteine 63, cysteine 47–cysteine 68, and cysteine 51–cysteine 70.

The protein belongs to the long (4 C-C) scorpion toxin superfamily. Sodium channel inhibitor family. Expressed by the venom gland.

The protein localises to the secreted. Its function is as follows. Putative sodium channel toxin. In Tityus serrulatus (Brazilian scorpion), this protein is Putative sodium channel toxin Ts40.